Consider the following 450-residue polypeptide: 23S rRNA (uracil(1939)-C(5))-methyltransferase RlmD (450 aa).

Positions 12–70 (SKQLSAKLSLSVNQLDHLGAGIAQHQGKVVFIPGALPDETVTVQLTEQKKNYARAKLIK) constitute a TRAM domain. Residues C83, C89, C92, and C171 each coordinate [4Fe-4S] cluster. S-adenosyl-L-methionine contacts are provided by Q283, F312, N317, E333, D360, and D380. Residue C406 is the Nucleophile of the active site.

The protein belongs to the class I-like SAM-binding methyltransferase superfamily. RNA M5U methyltransferase family. RlmD subfamily.

It carries out the reaction uridine(1939) in 23S rRNA + S-adenosyl-L-methionine = 5-methyluridine(1939) in 23S rRNA + S-adenosyl-L-homocysteine + H(+). Catalyzes the formation of 5-methyl-uridine at position 1939 (m5U1939) in 23S rRNA. The polypeptide is 23S rRNA (uracil(1939)-C(5))-methyltransferase RlmD (Shewanella baltica (strain OS195)).